The following is a 151-amino-acid chain: U1 small nuclear ribonucleoprotein C (151 aa).

The Matrin-type zinc finger occupies 4-36 (FYCEYCSIYLTHSSPAGRKQHSQGRKHISAKVE).

Belongs to the U1 small nuclear ribonucleoprotein C family. As to quaternary structure, U1 snRNP is composed of the 7 core Sm proteins B/B', D1, D2, D3, E, F and G that assemble in a heptameric protein ring on the Sm site of the small nuclear RNA to form the core snRNP, and at least 3 U1 snRNP-specific proteins U1-70K, U1-A and U1-C. U1-C interacts with U1 snRNA and the 5' splice-site region of the pre-mRNA.

The protein resides in the nucleus. In terms of biological role, component of the spliceosomal U1 snRNP, which is essential for recognition of the pre-mRNA 5' splice-site and the subsequent assembly of the spliceosome. U1-C is directly involved in initial 5' splice-site recognition for both constitutive and regulated alternative splicing. The interaction with the 5' splice-site seems to precede base-pairing between the pre-mRNA and the U1 snRNA. Stimulates commitment or early (E) complex formation by stabilizing the base pairing of the 5' end of the U1 snRNA and the 5' splice-site region. This chain is U1 small nuclear ribonucleoprotein C, found in Theileria annulata.